The primary structure comprises 605 residues: NADH-ubiquinone oxidoreductase chain 5 (605 aa).

Helical transmembrane passes span 8-28 (TLLSLLILTVPIMASNFYPYT), 34-54 (IYVKTMVSYAFLVSLIPTMIF), 87-107 (MILMPVALSVTWSIMEFSMWY), 117-137 (FFKYLLLFLITMMLLVTANNL), 140-160 (LFIGWEGVGIMSFLLIGWWYG), 171-191 (AILYNRIGDVGFLVAMAWFLF), 241-261 (TPVSALLHSSTMVVAGIFLLI), 273-293 (IQTMMLCLGAITTLFTAICAL), 301-321 (IVAFSTSSQLGLMMVTVGINQ), 324-344 (LAFLHICTHAFFKAMLFLCSG), 366-386 (LPFTTTALITGSLALTGMPFL), 409-429 (LFITLIATSLTAVYSTRIIYF), 457-477 (LLVGSIFAGFFISNNITPTTI), 482-502 (MPTYLKTTAMLVTLLGFIVAL), and 584-604 (IKLYFLSFLITLTLSLIMLNF).

It belongs to the complex I subunit 5 family. Core subunit of respiratory chain NADH dehydrogenase (Complex I) which is composed of 45 different subunits.

It is found in the mitochondrion inner membrane. It carries out the reaction a ubiquinone + NADH + 5 H(+)(in) = a ubiquinol + NAD(+) + 4 H(+)(out). In terms of biological role, core subunit of the mitochondrial membrane respiratory chain NADH dehydrogenase (Complex I) which catalyzes electron transfer from NADH through the respiratory chain, using ubiquinone as an electron acceptor. Essential for the catalytic activity and assembly of complex I. The chain is NADH-ubiquinone oxidoreductase chain 5 (MT-ND5) from Rousettus amplexicaudatus (Common rousette).